Reading from the N-terminus, the 128-residue chain is Putative pre-16S rRNA nuclease (128 aa).

The protein belongs to the YqgF nuclease family.

The protein localises to the cytoplasm. In terms of biological role, could be a nuclease involved in processing of the 5'-end of pre-16S rRNA. This is Putative pre-16S rRNA nuclease from Sulfurovum sp. (strain NBC37-1).